Consider the following 159-residue polypeptide: Small ribosomal subunit protein uS19 (159 aa).

This sequence belongs to the universal ribosomal protein uS19 family.

Functionally, protein S19 forms a complex with S13 that binds strongly to the 16S ribosomal RNA. The protein is Small ribosomal subunit protein uS19 of Pyrobaculum arsenaticum (strain DSM 13514 / JCM 11321 / PZ6).